Reading from the N-terminus, the 221-residue chain is Arginine ABC transporter permease protein ArtQ (221 aa).

An ABC transmembrane type-1 domain is found at 13-206 (ALMTLGLAVC…AVTLISQVGI (194 aa)). Helical transmembrane passes span 17–37 (LGLA…FAVL), 49–69 (VFVA…VYFG), 82–102 (IEFG…AAYA), 121–141 (GAAL…PQVW), and 186–206 (TWYG…QVGI).

It belongs to the binding-protein-dependent transport system permease family. HisMQ subfamily. The complex is composed of two ATP-binding proteins (ArtP), two transmembrane proteins (ArtM and ArtQ) and a solute-binding protein (ArtI).

It is found in the cell inner membrane. Part of the ABC transporter complex ArtPIQM involved in arginine transport. Probably responsible for the translocation of the substrate across the membrane. In Haemophilus influenzae (strain ATCC 51907 / DSM 11121 / KW20 / Rd), this protein is Arginine ABC transporter permease protein ArtQ (artQ).